Here is a 294-residue protein sequence, read N- to C-terminus: Cytidine deaminase (294 aa).

CMP/dCMP-type deaminase domains lie at D48–T168 and A187–F294. N89–E91 is a substrate binding site. H102 is a Zn(2+) binding site. E104 acts as the Proton donor in catalysis. Zn(2+) contacts are provided by C129 and C132.

It belongs to the cytidine and deoxycytidylate deaminase family. As to quaternary structure, homodimer. Requires Zn(2+) as cofactor.

It carries out the reaction cytidine + H2O + H(+) = uridine + NH4(+). It catalyses the reaction 2'-deoxycytidine + H2O + H(+) = 2'-deoxyuridine + NH4(+). Functionally, this enzyme scavenges exogenous and endogenous cytidine and 2'-deoxycytidine for UMP synthesis. The chain is Cytidine deaminase from Yersinia pseudotuberculosis serotype O:1b (strain IP 31758).